Consider the following 412-residue polypeptide: Proteasome-activating nucleotidase (412 aa).

A coiled-coil region spans residues 18–72; the sequence is YRYLVDRVAGMESQNQELKEQIRQLESDKRYIETQKIRYEREVRKLKSEIEHLKT. ATP-binding positions include 197-202 and H336; that span reads GTGKTL. Positions 410 to 412 are docks into pockets in the proteasome alpha-ring to cause gate opening; the sequence is MFA.

Belongs to the AAA ATPase family. In terms of assembly, homohexamer. The hexameric complex has a two-ring architecture resembling a top hat that caps the 20S proteasome core at one or both ends. Upon ATP-binding, the C-terminus of PAN interacts with the alpha-rings of the proteasome core by binding to the intersubunit pockets.

It localises to the cytoplasm. Its function is as follows. ATPase which is responsible for recognizing, binding, unfolding and translocation of substrate proteins into the archaeal 20S proteasome core particle. Is essential for opening the gate of the 20S proteasome via an interaction with its C-terminus, thereby allowing substrate entry and access to the site of proteolysis. Thus, the C-termini of the proteasomal ATPase function like a 'key in a lock' to induce gate opening and therefore regulate proteolysis. Unfolding activity requires energy from ATP hydrolysis, whereas ATP binding alone promotes ATPase-20S proteasome association which triggers gate opening, and supports translocation of unfolded substrates. This is Proteasome-activating nucleotidase from Methanospirillum hungatei JF-1 (strain ATCC 27890 / DSM 864 / NBRC 100397 / JF-1).